The chain runs to 89 residues: Signal recognition particle 19 kDa protein (89 aa).

This sequence belongs to the SRP19 family. Part of the signal recognition particle protein translocation system, which is composed of SRP and FtsY. Archaeal SRP consists of a 7S RNA molecule of 300 nucleotides and two protein subunits: SRP54 and SRP19.

Its subcellular location is the cytoplasm. Its function is as follows. Involved in targeting and insertion of nascent membrane proteins into the cytoplasmic membrane. Binds directly to 7S RNA and mediates binding of the 54 kDa subunit of the SRP. The polypeptide is Signal recognition particle 19 kDa protein (Methanococcus maripaludis (strain C5 / ATCC BAA-1333)).